A 707-amino-acid chain; its full sequence is Polyribonucleotide nucleotidyltransferase (707 aa).

Asp485 and Asp491 together coordinate Mg(2+). In terms of domain architecture, KH spans 552-611; sequence PRIHTMKINSDKIKDVIGKGGAVIRALTEETGTTIEIEDDGTIKIAATEGAAAKEAIRRI. One can recognise an S1 motif domain in the interval 621–689; it reads GRIYTGKVMR…RQGRIRLSMK (69 aa).

It belongs to the polyribonucleotide nucleotidyltransferase family. Component of the RNA degradosome, which is a multiprotein complex involved in RNA processing and mRNA degradation. Mg(2+) serves as cofactor.

Its subcellular location is the cytoplasm. It carries out the reaction RNA(n+1) + phosphate = RNA(n) + a ribonucleoside 5'-diphosphate. Involved in mRNA degradation. Catalyzes the phosphorolysis of single-stranded polyribonucleotides processively in the 3'- to 5'-direction. The sequence is that of Polyribonucleotide nucleotidyltransferase from Photobacterium profundum (strain SS9).